We begin with the raw amino-acid sequence, 143 residues long: MQLNSIKPAPGAKHPKRRVGRGIGSGLGKTAGRGHKGQKSRAGGFHKVGFEGGQMPLQRRLPKRGFVSPTKKNDAEVRLSALDRIPGDIIDILILKQAGLVSGSALNVKVILSGKIERAVKLQGIPVTKGAKAAIEAAGGSVE.

The disordered stretch occupies residues 1 to 54; that stretch reads MQLNSIKPAPGAKHPKRRVGRGIGSGLGKTAGRGHKGQKSRAGGFHKVGFEGGQ. Gly residues predominate over residues 21–31; the sequence is RGIGSGLGKTA.

It belongs to the universal ribosomal protein uL15 family. As to quaternary structure, part of the 50S ribosomal subunit.

Functionally, binds to the 23S rRNA. This is Large ribosomal subunit protein uL15 from Nitrosospira multiformis (strain ATCC 25196 / NCIMB 11849 / C 71).